The sequence spans 606 residues: Melanoma-associated antigen D2 (606 aa).

The interval 1–204 (MSDTSESGAG…QASGTTGGRR (204 aa)) is disordered. At serine 2 the chain carries N-acetylserine. Serine 5 carries the phosphoserine modification. The segment covering 24 to 37 (SSMMQTLLTVTQNV) has biased composition (polar residues). A Phosphothreonine modification is found at threonine 72. Residues 81–93 (TQASSTTQLTDTQ) show a composition bias toward polar residues. Residues 122–131 (ETKKVSHVAD) show a composition bias toward basic and acidic residues. Low complexity predominate over residues 142–164 (EAAPSQAPADEPEPESAAAQSQE). The residue at position 157 (serine 157) is a Phosphoserine. The segment covering 171–181 (KVKAKKARKVK) has biased composition (basic residues). 6 positions are modified to phosphoserine: serine 190, serine 191, serine 194, serine 197, serine 244, and serine 247. The span at 248-260 (PKARRGKARRRAA) shows a compositional bias: basic residues. The disordered stretch occupies residues 248-275 (PKARRGKARRRAAKLQSSQEPEAPPPRD). Serine 264 and serine 265 each carry phosphoserine. In terms of domain architecture, MAGE spans 279–478 (LQGRANDLVK…KEWAAQYREA (200 aa)). The interval 534-563 (GAEAKAKAQESGSASTGASTSTNNSASASA) is disordered.

Interacts with GNAS. May interact with DNAJB1. In terms of tissue distribution, widely expressed. In the developing and adult kidney, expressed in the thick ascending limb of the loop of Henle and the distal convoluted tubules outside the loop.

Its function is as follows. Regulates the expression, localization to the plasma membrane and function of the sodium chloride cotransporters SLC12A1 and SLC12A3, two key components of salt reabsorption in the distal renal tubule. The polypeptide is Melanoma-associated antigen D2 (MAGED2) (Homo sapiens (Human)).